We begin with the raw amino-acid sequence, 122 residues long: Large ribosomal subunit protein uL14 (122 aa).

This sequence belongs to the universal ribosomal protein uL14 family. In terms of assembly, part of the 50S ribosomal subunit. Forms a cluster with proteins L3 and L19. In the 70S ribosome, L14 and L19 interact and together make contacts with the 16S rRNA in bridges B5 and B8.

Functionally, binds to 23S rRNA. Forms part of two intersubunit bridges in the 70S ribosome. The sequence is that of Large ribosomal subunit protein uL14 from Thiobacillus denitrificans (strain ATCC 25259 / T1).